Consider the following 261-residue polypeptide: Indole-3-glycerol phosphate synthase (261 aa).

This sequence belongs to the TrpC family.

The catalysed reaction is 1-(2-carboxyphenylamino)-1-deoxy-D-ribulose 5-phosphate + H(+) = (1S,2R)-1-C-(indol-3-yl)glycerol 3-phosphate + CO2 + H2O. The protein operates within amino-acid biosynthesis; L-tryptophan biosynthesis; L-tryptophan from chorismate: step 4/5. This Burkholderia ambifaria (strain ATCC BAA-244 / DSM 16087 / CCUG 44356 / LMG 19182 / AMMD) (Burkholderia cepacia (strain AMMD)) protein is Indole-3-glycerol phosphate synthase.